The sequence spans 467 residues: 3-isopropylmalate dehydratase large subunit (467 aa).

[4Fe-4S] cluster is bound by residues Cys-347, Cys-407, and Cys-410.

It belongs to the aconitase/IPM isomerase family. LeuC type 1 subfamily. As to quaternary structure, heterodimer of LeuC and LeuD. [4Fe-4S] cluster serves as cofactor.

It catalyses the reaction (2R,3S)-3-isopropylmalate = (2S)-2-isopropylmalate. Its pathway is amino-acid biosynthesis; L-leucine biosynthesis; L-leucine from 3-methyl-2-oxobutanoate: step 2/4. Functionally, catalyzes the isomerization between 2-isopropylmalate and 3-isopropylmalate, via the formation of 2-isopropylmaleate. This chain is 3-isopropylmalate dehydratase large subunit, found in Pelagibacter ubique (strain HTCC1062).